We begin with the raw amino-acid sequence, 486 residues long: Arginine/agmatine antiporter (486 aa).

The next 12 helical transmembrane spans lie at 12 to 32, 41 to 61, 85 to 105, 129 to 149, 160 to 180, 211 to 231, 242 to 262, 296 to 316, 341 to 361, 367 to 387, 418 to 438, and 461 to 481; these read LGAI…GIFS, AGAG…FFIA, GFGP…QIFG, NTIP…FIVL, IIGT…TAFA, STML…VMSA, ATLL…ILPF, VGLL…VAEI, LSLY…YFST, MLSI…AFLF, LWLI…LLAL, and EVTK…LFST.

This sequence belongs to the amino acid-polyamine-organocation (APC) superfamily. Basic amino acid/polyamine antiporter (APA) (TC 2.A.3.2) family.

It localises to the cell inner membrane. Functionally, catalyzes the exchange of L-arginine for agmatine. The arginine uptake by the bacterium in the macrophage may be a virulence factor against the host innate immune response. The protein is Arginine/agmatine antiporter (aaxC) of Chlamydia caviae (strain ATCC VR-813 / DSM 19441 / 03DC25 / GPIC) (Chlamydophila caviae).